We begin with the raw amino-acid sequence, 361 residues long: N-methyltransferase benX (361 aa).

The protein belongs to the methyltransferase superfamily.

The protein operates within secondary metabolite biosynthesis. Functionally, N-methyltransferase; part of the gene cluster that mediates the biosynthesis of benzomalvin A and D. The pathway begins with the loading of amino acid precursors onto the A domains of the non ribosomal peptide synthetases benY and benZ. BenY and the A1 domain of benZ are loaded with anthranilate (Anth), while the A2 domain of benZ is loaded with phenylalanine (Phe). N-methylation of Phe by the methyltransferase benX may happen before loading of Phe onto benZ, after loading of Phe, or after dipeptide formation. Condensation of Anth with the secondary amine of NmPhe or Phe is catalyzed by the C1 domain of benZ, forming a dipeptide intermediate. This is followed by in trans condensation of the Anth-NmPhe dipeptide with Anth bound to the T domain of benY by the C2 domain of benZ to form the linear tripeptide Anth-NmPhe-Anth. Cyclization and release of the tripeptide is then catalyzed by the C-terminal C domain of benY and the resulting 11-member macrocyclic intermediate is expected to spontaneously collapse to form the benzodiazepine core. Benzomalvin A is in conformational equilibrium with its atropisomer, benzomalvin D. In Aspergillus terreus, this protein is N-methyltransferase benX.